A 352-amino-acid chain; its full sequence is Probable cytosolic iron-sulfur protein assembly protein CIAO1 homolog (352 aa).

WD repeat units lie at residues 14-53, 63-102, 107-146, 152-191, 200-240, 268-306, and 319-352; these read GHDD…PSEQ, CHTR…WEQV, GHEN…EFEC, GHSQ…WGCA, GHES…TSTP, HHRR…LTQP, and AHGA…WWLR.

Belongs to the WD repeat CIA1 family.

Essential component of the cytosolic iron-sulfur (Fe/S) protein assembly machinery. Required for the maturation of extramitochondrial Fe/S proteins. This Chlamydomonas reinhardtii (Chlamydomonas smithii) protein is Probable cytosolic iron-sulfur protein assembly protein CIAO1 homolog.